Here is a 500-residue protein sequence, read N- to C-terminus: Protein ASPARTIC PROTEASE IN GUARD CELL 1 (500 aa).

The first 24 residues, 1 to 24 (MAFPRFLSLLAVVTLSLFLTTTDA), serve as a signal peptide directing secretion. The 335-residue stretch at 162–496 (YFSRIGVGTP…DLSKNVIGLS (335 aa)) folds into the Peptidase A1 domain. The active site involves D180. Intrachain disulfides connect C190–C193, C196–C271, C217–C235, C222–C230, C307–C500, and C419–C461. Residue D379 is part of the active site.

Belongs to the peptidase A1 family. As to expression, expressed in young seedlings, leaves, guard-cells, stems, flowers and siliques, but not in roots or mesophyll cells.

It localises to the endoplasmic reticulum. Its activity is regulated as follows. Inhibited by pepstatin A. Its function is as follows. Aspartic protease involved in drought avoidance through abscisic acid signaling. This is Protein ASPARTIC PROTEASE IN GUARD CELL 1 (ASPG1) from Arabidopsis thaliana (Mouse-ear cress).